We begin with the raw amino-acid sequence, 338 residues long: Sorting nexin-15 (338 aa).

In terms of domain architecture, PX spans 1 to 131 (MSRRAKKDDF…EFFRGGEVTR (131 aa)). Residues Arg-52, Ser-54, Arg-88, and Arg-97 each contribute to the a 1,2-diacyl-sn-glycero-3-phospho-(1D-myo-inositol-3-phosphate) site. Arg-106 bears the Omega-N-methylarginine mark. The segment at 134–155 (EVSRDLQILPPPLIPTPPSDEA) is disordered. A compositionally biased stretch (pro residues) spans 142–151 (LPPPLIPTPP). Phosphoserine occurs at positions 202 and 228. The tract at residues 240–270 (VQSKRLDQEPWEPGGREEEEAEDGDPAPAYL) is disordered. Positions 266–338 (APAYLGQATE…RAETLHAHLP (73 aa)) constitute an MIT domain.

This sequence belongs to the sorting nexin family. As to quaternary structure, homodimer. Interacts with SNX1, SNX2 and SNX4.

It localises to the cytoplasm. It is found in the membrane. The protein localises to the cytoplasmic vesicle membrane. Functionally, may be involved in several stages of intracellular trafficking. Overexpression of SNX15 disrupts the normal trafficking of proteins from the plasma membrane to recycling endosomes or the TGN. The sequence is that of Sorting nexin-15 (Snx15) from Rattus norvegicus (Rat).